The chain runs to 914 residues: High affinity cAMP-specific and IBMX-insensitive 3',5'-cyclic phosphodiesterase 8 (914 aa).

Disordered stretches follow at residues 1-27 (MGCS…PLDA) and 113-138 (RRAT…HRKS). The span at 116–129 (TGSTGTSGTSSSGG) shows a compositional bias: low complexity. Positions 312–359 (TQQALYTALHRLKEVVLITDDLLRIQYANRATERLLNMRLDEIISKQL) constitute a PAS domain. The region spanning 558–893 (TAAIVPAKMK…SQWKKYDEQG (336 aa)) is the PDEase domain. Histidine 640 serves as the catalytic Proton donor. Residues histidine 644, histidine 682, aspartate 683, and aspartate 799 each coordinate a divalent metal cation.

The protein belongs to the cyclic nucleotide phosphodiesterase family. PDE8 subfamily. A divalent metal cation serves as cofactor. As to expression, expressed in Malpighian tubules and head.

The enzyme catalyses 3',5'-cyclic AMP + H2O = AMP + H(+). Its pathway is purine metabolism; 3',5'-cyclic AMP degradation; AMP from 3',5'-cyclic AMP: step 1/1. Functionally, hydrolyzes the second messenger cAMP, which is a key regulator of many important physiological processes. Involved in the positive regulation of MAP kinase signaling and in inhibiting oxidative stress-induced cell death. In Drosophila melanogaster (Fruit fly), this protein is High affinity cAMP-specific and IBMX-insensitive 3',5'-cyclic phosphodiesterase 8.